The chain runs to 151 residues: MHSLQAKILDPRLGSDFPLPQYATPGSAGLDLRAMLKEDTVLGPGQTLLIPTGLSIYIADPGLAALVLPRSGLGHKHGIVLGNLVGLIDSDYQGELMVSCWNRGESPFTIAVGERIAQLVLVPVVQAHFELVEQFDESQRGAGGFGHSGSH.

Substrate-binding positions include 70–72 (RSG), asparagine 83, 87–89 (LID), and methionine 97.

Belongs to the dUTPase family. It depends on Mg(2+) as a cofactor.

It catalyses the reaction dUTP + H2O = dUMP + diphosphate + H(+). Its pathway is pyrimidine metabolism; dUMP biosynthesis; dUMP from dCTP (dUTP route): step 2/2. In terms of biological role, this enzyme is involved in nucleotide metabolism: it produces dUMP, the immediate precursor of thymidine nucleotides and it decreases the intracellular concentration of dUTP so that uracil cannot be incorporated into DNA. The chain is Deoxyuridine 5'-triphosphate nucleotidohydrolase from Pseudomonas aeruginosa (strain UCBPP-PA14).